The following is a 280-amino-acid chain: Putative pyruvate, phosphate dikinase regulatory protein (280 aa).

Position 158 to 165 (158 to 165 (GVSRTSKT)) interacts with ADP.

It belongs to the pyruvate, phosphate/water dikinase regulatory protein family. PDRP subfamily.

It catalyses the reaction N(tele)-phospho-L-histidyl/L-threonyl-[pyruvate, phosphate dikinase] + ADP = N(tele)-phospho-L-histidyl/O-phospho-L-threonyl-[pyruvate, phosphate dikinase] + AMP + H(+). The enzyme catalyses N(tele)-phospho-L-histidyl/O-phospho-L-threonyl-[pyruvate, phosphate dikinase] + phosphate + H(+) = N(tele)-phospho-L-histidyl/L-threonyl-[pyruvate, phosphate dikinase] + diphosphate. In terms of biological role, bifunctional serine/threonine kinase and phosphorylase involved in the regulation of the pyruvate, phosphate dikinase (PPDK) by catalyzing its phosphorylation/dephosphorylation. The chain is Putative pyruvate, phosphate dikinase regulatory protein from Lactobacillus gasseri (strain ATCC 33323 / DSM 20243 / BCRC 14619 / CIP 102991 / JCM 1131 / KCTC 3163 / NCIMB 11718 / NCTC 13722 / AM63).